A 103-amino-acid chain; its full sequence is Large ribosomal subunit protein uL23 (103 aa).

It belongs to the universal ribosomal protein uL23 family. Part of the 50S ribosomal subunit. Contacts protein L29, and trigger factor when it is bound to the ribosome.

One of the early assembly proteins it binds 23S rRNA. One of the proteins that surrounds the polypeptide exit tunnel on the outside of the ribosome. Forms the main docking site for trigger factor binding to the ribosome. The polypeptide is Large ribosomal subunit protein uL23 (Pelodictyon phaeoclathratiforme (strain DSM 5477 / BU-1)).